The primary structure comprises 479 residues: Sulfate adenylyltransferase subunit 1 (479 aa).

The tr-type G domain maps to K25 to R239. The interval G34–S41 is G1. G34–S41 provides a ligand contact to GTP. Residues G92–D96 are G2. The interval D113–G116 is G3. Residues D113–H117 and N168–D171 contribute to the GTP site. The G4 stretch occupies residues N168–D171. The G5 stretch occupies residues S206–L208.

This sequence belongs to the TRAFAC class translation factor GTPase superfamily. Classic translation factor GTPase family. CysN/NodQ subfamily. As to quaternary structure, heterodimer composed of CysD, the smaller subunit, and CysN.

The enzyme catalyses sulfate + ATP + H(+) = adenosine 5'-phosphosulfate + diphosphate. It participates in sulfur metabolism; hydrogen sulfide biosynthesis; sulfite from sulfate: step 1/3. Functionally, with CysD forms the ATP sulfurylase (ATPS) that catalyzes the adenylation of sulfate producing adenosine 5'-phosphosulfate (APS) and diphosphate, the first enzymatic step in sulfur assimilation pathway. APS synthesis involves the formation of a high-energy phosphoric-sulfuric acid anhydride bond driven by GTP hydrolysis by CysN coupled to ATP hydrolysis by CysD. This Salmonella paratyphi A (strain ATCC 9150 / SARB42) protein is Sulfate adenylyltransferase subunit 1.